A 287-amino-acid chain; its full sequence is 2-dehydro-3-deoxyphosphooctonate aldolase (287 aa).

This sequence belongs to the KdsA family.

Its subcellular location is the cytoplasm. It carries out the reaction D-arabinose 5-phosphate + phosphoenolpyruvate + H2O = 3-deoxy-alpha-D-manno-2-octulosonate-8-phosphate + phosphate. It functions in the pathway carbohydrate biosynthesis; 3-deoxy-D-manno-octulosonate biosynthesis; 3-deoxy-D-manno-octulosonate from D-ribulose 5-phosphate: step 2/3. Its pathway is bacterial outer membrane biogenesis; lipopolysaccharide biosynthesis. In Rhodopseudomonas palustris (strain TIE-1), this protein is 2-dehydro-3-deoxyphosphooctonate aldolase.